The following is a 214-amino-acid chain: Pyridoxine/pyridoxamine 5'-phosphate oxidase (214 aa).

Residues 8–11 (RINY) and K66 contribute to the substrate site. FMN is bound by residues 61–66 (RILLIK), 76–77 (FT), R82, K83, and Q105. Positions 123, 127, and 131 each coordinate substrate. Residues 140–141 (QS) and W184 contribute to the FMN site. 190 to 192 (RLH) is a substrate binding site. An FMN-binding site is contributed by R194.

Belongs to the pyridoxamine 5'-phosphate oxidase family. As to quaternary structure, homodimer. It depends on FMN as a cofactor.

It carries out the reaction pyridoxamine 5'-phosphate + O2 + H2O = pyridoxal 5'-phosphate + H2O2 + NH4(+). It catalyses the reaction pyridoxine 5'-phosphate + O2 = pyridoxal 5'-phosphate + H2O2. It participates in cofactor metabolism; pyridoxal 5'-phosphate salvage; pyridoxal 5'-phosphate from pyridoxamine 5'-phosphate: step 1/1. The protein operates within cofactor metabolism; pyridoxal 5'-phosphate salvage; pyridoxal 5'-phosphate from pyridoxine 5'-phosphate: step 1/1. Functionally, catalyzes the oxidation of either pyridoxine 5'-phosphate (PNP) or pyridoxamine 5'-phosphate (PMP) into pyridoxal 5'-phosphate (PLP). In Burkholderia vietnamiensis (strain G4 / LMG 22486) (Burkholderia cepacia (strain R1808)), this protein is Pyridoxine/pyridoxamine 5'-phosphate oxidase.